Here is a 342-residue protein sequence, read N- to C-terminus: Ribosomal RNA small subunit methyltransferase C (342 aa).

It belongs to the methyltransferase superfamily. RsmC family. Monomer.

Its subcellular location is the cytoplasm. It catalyses the reaction guanosine(1207) in 16S rRNA + S-adenosyl-L-methionine = N(2)-methylguanosine(1207) in 16S rRNA + S-adenosyl-L-homocysteine + H(+). In terms of biological role, specifically methylates the guanine in position 1207 of 16S rRNA in the 30S particle. The protein is Ribosomal RNA small subunit methyltransferase C of Citrobacter koseri (strain ATCC BAA-895 / CDC 4225-83 / SGSC4696).